The following is a 1243-amino-acid chain: MSEAPRFFVGPEDTEINPGNYRHFFHHADEDDEEEDDSPPERQIVVGICSMAKKSKSKPMKEILERISLFKYITVVVFEEEVILNEPVENWPLCDCLISFHSKGFPLDKAVAYAKLRNPFVINDLNMQYLIQDRREVYSILQAEGILLPRYAILNRDPNNPKECNLIEGEDHVEVNGEVFQKPFVEKPVSAEDHNVYIYYPTSAGGGSQRLFRKIGSRSSVYSPESNVRKTGSYIYEEFMPTDGTDVKVYTVGPDYAHAEARKSPALDGKVERDSEGKEVRYPVILNAREKLIAWKVCLAFKQTVCGFDLLRANGQSYVCDVNGFSFVKNSMKYYDDCAKILGNIVMRELAPQFHIPWSIPLEAEDIPIVPTTSGTMMELRCVIAVIRHGDRTPKQKMKMEVRHQKFFDLFEKCDGYKSGKLKLKKPKQLQEVLDIARQLLMELGQNNDSEIEENKPKLEQLKTVLEMYGHFSGINRKVQLTYLPHGCPKTSSEEEDSRREEPSLLLVLKWGGELTPAGRVQAEELGRAFRCMYPGGQGDYAGFPGCGLLRLHSTYRHDLKIYASDEGRVQMTAAAFAKGLLALEGELTPILVQMVKSANMNGLLDSDSDSLSSCQQRVKARLHEILQKDRDFTAEDYEKLTPSGSISLIKSMHLIKNPVKTCDKVYSLIQSLTSQIRHRMEDPKSSDIQLYHSETLELMLRRWSKLEKDFKTKNGRYDISKIPDIYDCIKYDVQHNGSLKLENTMELYRLSKALADIVIPQEYGITKAEKLEIAKGYCTPLVRKIRSDLQRTQDDDTVNKLHPVYSRGVLSPERHVRTRLYFTSESHVHSLLSILRYGALCNESKDEQWKRAMDYLNVVNELNYMTQIVIMLYEDPNKDLSSEERFHVELHFSPGAKGCEEDKNLPSGYGYRPASRENEGRRPFKIDNDDEPHTSKRDEVDRAVILFKPMVSEPIHIHRKSPLPRSRKTATNDEESPLSVSSPEGTGTWLHYTSGVGTGRRRRRSGEQITSSPVSPKSLAFTSSIFGSWQQVVSENANYLRTPRTLVEQKQNPTVGSHCAGLFSTSVLGGSSSAPNLQDYARTHRKKLTSSGCIDDATRGSAVKRFSISFARHPTNGFELYSMVPSICPLETLHNALSLKQVDEFLASIASPSSDVPRKTAEISSTALRSSPIMRKKVSLNTYTPAKILPTPPATLKSTKASSKPATSGPSSAVVPNTSSRKKNITSKTETHEHKKNTGKKK.

Ser-38 bears the Phosphoserine mark. 53 to 54 lines the substrate pocket; it reads KK. 4 residues coordinate ATP: Arg-134, Lys-187, His-194, and Arg-213. 213–214 is a binding site for substrate; sequence RK. Ser-223 carries the post-translational modification Phosphoserine. ATP contacts are provided by residues 237–240 and 246–248; these read EEFM and DVK. Residues Lys-248 and Arg-262 each contribute to the substrate site. ATP-binding positions include Ser-264, Asp-309, and 321–323; that span reads DVN. Position 326-329 (326-329) interacts with substrate; the sequence is SFVK. The tract at residues 371 to 442 is polyphosphoinositide-binding domain; it reads PTTSGTMMEL…VLDIARQLLM (72 aa). Disordered stretches follow at residues 898-941 and 957-1016; these read KGCE…RDEV and HIHR…SPVS. Residues 915–941 are compositionally biased toward basic and acidic residues; that stretch reads ASRENEGRRPFKIDNDDEPHTSKRDEV. Basic residues predominate over residues 958–969; sequence IHRKSPLPRSRK. Phosphoserine occurs at positions 1006, 1016, 1074, 1091, 1165, 1172, and 1180. The interval 1185 to 1243 is disordered; that stretch reads TPAKILPTPPATLKSTKASSKPATSGPSSAVVPNTSSRKKNITSKTETHEHKKNTGKKK. Over residues 1195-1209 the composition is skewed to low complexity; that stretch reads ATLKSTKASSKPATS. Residues 1210–1220 show a composition bias toward polar residues; sequence GPSSAVVPNTS. Ser-1220 and Ser-1221 each carry phosphoserine.

The protein belongs to the histidine acid phosphatase family. VIP1 subfamily.

Its subcellular location is the cytoplasm. It localises to the cytosol. It catalyses the reaction 1D-myo-inositol hexakisphosphate + ATP = 1-diphospho-1D-myo-inositol 2,3,4,5,6-pentakisphosphate + ADP. The enzyme catalyses 5-diphospho-1D-myo-inositol 1,2,3,4,6-pentakisphosphate + ATP + H(+) = 1,5-bis(diphospho)-1D-myo-inositol 2,3,4,6-tetrakisphosphate + ADP. Functionally, bifunctional inositol kinase that acts in concert with the IP6K kinases IP6K1, IP6K2 and IP6K3 to synthesize the diphosphate group-containing inositol pyrophosphates diphosphoinositol pentakisphosphate, PP-InsP5, and bis-diphosphoinositol tetrakisphosphate, (PP)2-InsP4. PP-InsP5 and (PP)2-InsP4, also respectively called InsP7 and InsP8, regulate a variety of cellular processes, including apoptosis, vesicle trafficking, cytoskeletal dynamics, exocytosis, insulin signaling and neutrophil activation. Phosphorylates inositol hexakisphosphate (InsP6) at position 1 to produce PP-InsP5 which is in turn phosphorylated by IP6Ks to produce (PP)2-InsP4. Alternatively, phosphorylates PP-InsP5 at position 1, produced by IP6Ks from InsP6, to produce (PP)2-InsP4. Required for normal hearing. In Homo sapiens (Human), this protein is Inositol hexakisphosphate and diphosphoinositol-pentakisphosphate kinase 2.